Reading from the N-terminus, the 704-residue chain is Glycogen [starch] synthase, liver (704 aa).

Phosphoserine is present on residues S8 and S11. Position 40 (K40) interacts with UDP. UDP-alpha-D-glucose-binding residues include H205 and R211. 5 residues coordinate alpha-D-glucose 6-phosphate: H291, E292, Q294, H297, and K301. R331 is a binding site for UDP. R331 is a binding site for UDP-alpha-D-glucose. H501 is an alpha-D-glucose 6-phosphate binding site. Residues E510, W512, and G513 each contribute to the UDP-alpha-D-glucose site. T515 is a binding site for UDP. Positions 582 and 586 each coordinate alpha-D-glucose 6-phosphate. The segment at 620-704 is disordered; that stretch reads KFHLEPTSPP…KKKLHGEYKN (85 aa). Position 627 is a phosphoserine (S627). 4 positions are modified to phosphoserine; by GSK3-alpha and GSK3-beta: S641, S645, S649, and S653. Over residues 647-657 the composition is skewed to low complexity; sequence SGSQTSSPQSS. S657 is subject to Phosphoserine; by CK2. A compositionally biased stretch (acidic residues) spans 659-675; that stretch reads VENEGDEDERYDEEEEA. Phosphoserine is present on S684.

The protein belongs to the glycosyltransferase 3 family. As to quaternary structure, part of the glycogen synthase (GS)-glycogenin complex, a heterooctamer composed of a tetramer of GS and 2 dimers of glycogenin, where each GS protomer binds to one glycogenin subunit (via glycogenin C-terminus); the GS tetramer may dissociate from glycogenin dimers to continue glycogen polymerization on its own. May also form a heterooctamer complex with GYG1 (via GYG1 C-terminus). Post-translationally, primed phosphorylation at Ser-657 (site 5) by CSNK2A1 and CSNK2A2 is required for inhibitory phosphorylation at Ser-641 (site 3a), Ser-645 (site 3b), Ser-649 (site 3c) and Ser-653 (site 4) by GSK3A an GSK3B. Dephosphorylation at Ser-641 and Ser-645 by PP1 activates the enzyme. Phosphorylation at Ser-8 is not required for interaction with GYG1. Interaction with GYG1 does not regulate the phosphorylation at Ser-8 and Ser-641. As to expression, specifically expressed in liver (at protein level).

It catalyses the reaction [(1-&gt;4)-alpha-D-glucosyl](n) + UDP-alpha-D-glucose = [(1-&gt;4)-alpha-D-glucosyl](n+1) + UDP + H(+). It participates in glycan biosynthesis; glycogen biosynthesis. Allosteric activation by glucose-6-phosphate. Phosphorylation reduces the activity towards UDP-glucose. When in the non-phosphorylated state, glycogen synthase does not require glucose-6-phosphate as an allosteric activator; when phosphorylated it does. Glycogen synthase participates in the glycogen biosynthetic process along with glycogenin and glycogen branching enzyme. Extends the primer composed of a few glucose units formed by glycogenin by adding new glucose units to it. In this context, glycogen synthase transfers the glycosyl residue from UDP-Glc to the non-reducing end of alpha-1,4-glucan. In Rattus norvegicus (Rat), this protein is Glycogen [starch] synthase, liver.